Reading from the N-terminus, the 438-residue chain is SPbeta prophage-derived uncharacterized protein YopA (438 aa).

Residues 391 to 411 (LHVLYLGVWYLELLTLGILGY) form a helical membrane-spanning segment.

Its subcellular location is the cell membrane. The protein is SPbeta prophage-derived uncharacterized protein YopA (yopA) of Bacillus subtilis (strain 168).